Here is a 242-residue protein sequence, read N- to C-terminus: Guanylate kinase (242 aa).

Positions 22–200 constitute a Guanylate kinase-like domain; that stretch reads GLLIVMTGAS…AVRELQAVQR (179 aa). 29-36 is an ATP binding site; sequence GASGVGKG.

This sequence belongs to the guanylate kinase family.

The protein localises to the cytoplasm. The enzyme catalyses GMP + ATP = GDP + ADP. In terms of biological role, essential for recycling GMP and indirectly, cGMP. The protein is Guanylate kinase of Deinococcus geothermalis (strain DSM 11300 / CIP 105573 / AG-3a).